Consider the following 229-residue polypeptide: Peptidyl-prolyl cis-trans isomerase FKBP17-1, chloroplastic (229 aa).

A chloroplast-targeting transit peptide spans 1-63 (MIRCFAWTPL…SISLSIIAVT (63 aa)). The PPIase FKBP-type domain occupies 105–225 (GDQIEIHYYG…VFDIELVSTR (121 aa)).

Belongs to the FKBP-type PPIase family.

The protein resides in the plastid. It is found in the chloroplast thylakoid lumen. It catalyses the reaction [protein]-peptidylproline (omega=180) = [protein]-peptidylproline (omega=0). PPIases accelerate the folding of proteins. It catalyzes the cis-trans isomerization of proline imidic peptide bonds in oligopeptides. This is Peptidyl-prolyl cis-trans isomerase FKBP17-1, chloroplastic (FKBP17-1) from Arabidopsis thaliana (Mouse-ear cress).